The following is a 208-amino-acid chain: Probable nicotinate-nucleotide adenylyltransferase (208 aa).

The protein belongs to the NadD family.

The enzyme catalyses nicotinate beta-D-ribonucleotide + ATP + H(+) = deamido-NAD(+) + diphosphate. It functions in the pathway cofactor biosynthesis; NAD(+) biosynthesis; deamido-NAD(+) from nicotinate D-ribonucleotide: step 1/1. Its function is as follows. Catalyzes the reversible adenylation of nicotinate mononucleotide (NaMN) to nicotinic acid adenine dinucleotide (NaAD). The chain is Probable nicotinate-nucleotide adenylyltransferase from Nostoc sp. (strain PCC 7120 / SAG 25.82 / UTEX 2576).